Reading from the N-terminus, the 469-residue chain is Cytoplasmic tRNA 2-thiolation protein 2 (469 aa).

Belongs to the CTU2/NCS2 family.

It localises to the cytoplasm. Its pathway is tRNA modification; 5-methoxycarbonylmethyl-2-thiouridine-tRNA biosynthesis. In terms of biological role, plays a central role in 2-thiolation of mcm(5)S(2)U at tRNA wobble positions of tRNA(Lys), tRNA(Glu) and tRNA(Gln). May act by forming a heterodimer with NCS6 that ligates sulfur from thiocarboxylated URM1 onto the uridine of tRNAs at wobble position. Prior mcm(5) tRNA modification by the elongator complex is required for 2-thiolation. May also be involved in protein urmylation. This is Cytoplasmic tRNA 2-thiolation protein 2 from Candida glabrata (strain ATCC 2001 / BCRC 20586 / JCM 3761 / NBRC 0622 / NRRL Y-65 / CBS 138) (Yeast).